Reading from the N-terminus, the 150-residue chain is D-aminoacyl-tRNA deacylase (150 aa).

A Gly-cisPro motif, important for rejection of L-amino acids motif is present at residues 138–139; that stretch reads GP.

Belongs to the DTD family. Homodimer.

It localises to the cytoplasm. The catalysed reaction is glycyl-tRNA(Ala) + H2O = tRNA(Ala) + glycine + H(+). It catalyses the reaction a D-aminoacyl-tRNA + H2O = a tRNA + a D-alpha-amino acid + H(+). In terms of biological role, an aminoacyl-tRNA editing enzyme that deacylates mischarged D-aminoacyl-tRNAs. Also deacylates mischarged glycyl-tRNA(Ala), protecting cells against glycine mischarging by AlaRS. Acts via tRNA-based rather than protein-based catalysis; rejects L-amino acids rather than detecting D-amino acids in the active site. By recycling D-aminoacyl-tRNA to D-amino acids and free tRNA molecules, this enzyme counteracts the toxicity associated with the formation of D-aminoacyl-tRNA entities in vivo and helps enforce protein L-homochirality. In Bacteroides fragilis (strain ATCC 25285 / DSM 2151 / CCUG 4856 / JCM 11019 / LMG 10263 / NCTC 9343 / Onslow / VPI 2553 / EN-2), this protein is D-aminoacyl-tRNA deacylase.